The chain runs to 157 residues: 2-C-methyl-D-erythritol 2,4-cyclodiphosphate synthase (157 aa).

A divalent metal cation contacts are provided by aspartate 8 and histidine 10. Residues 8–10 (DVH) and 34–35 (HS) contribute to the 4-CDP-2-C-methyl-D-erythritol 2-phosphate site. Histidine 42 serves as a coordination point for a divalent metal cation. 4-CDP-2-C-methyl-D-erythritol 2-phosphate-binding positions include 56–58 (DIG), 61–65 (FPDTD), 100–106 (AQAPKMA), 132–135 (TTTE), phenylalanine 139, and arginine 142.

It belongs to the IspF family. In terms of assembly, homotrimer. The cofactor is a divalent metal cation.

It carries out the reaction 4-CDP-2-C-methyl-D-erythritol 2-phosphate = 2-C-methyl-D-erythritol 2,4-cyclic diphosphate + CMP. It participates in isoprenoid biosynthesis; isopentenyl diphosphate biosynthesis via DXP pathway; isopentenyl diphosphate from 1-deoxy-D-xylulose 5-phosphate: step 4/6. In terms of biological role, involved in the biosynthesis of isopentenyl diphosphate (IPP) and dimethylallyl diphosphate (DMAPP), two major building blocks of isoprenoid compounds. Catalyzes the conversion of 4-diphosphocytidyl-2-C-methyl-D-erythritol 2-phosphate (CDP-ME2P) to 2-C-methyl-D-erythritol 2,4-cyclodiphosphate (ME-CPP) with a corresponding release of cytidine 5-monophosphate (CMP). This is 2-C-methyl-D-erythritol 2,4-cyclodiphosphate synthase from Pseudomonas syringae pv. tomato (strain ATCC BAA-871 / DC3000).